Consider the following 670-residue polypeptide: DNA ligase (670 aa).

NAD(+)-binding positions include 32 to 36 (DAEYD), 81 to 82 (SL), and E113. The N6-AMP-lysine intermediate role is filled by K115. Positions 136, 173, 290, and 314 each coordinate NAD(+). The Zn(2+) site is built by C408, C411, C426, and C432. Positions 592–670 (EIDSPFAGKT…EAEMIRLLGE (79 aa)) constitute a BRCT domain.

It belongs to the NAD-dependent DNA ligase family. LigA subfamily. Requires Mg(2+) as cofactor. It depends on Mn(2+) as a cofactor.

The catalysed reaction is NAD(+) + (deoxyribonucleotide)n-3'-hydroxyl + 5'-phospho-(deoxyribonucleotide)m = (deoxyribonucleotide)n+m + AMP + beta-nicotinamide D-nucleotide.. Functionally, DNA ligase that catalyzes the formation of phosphodiester linkages between 5'-phosphoryl and 3'-hydroxyl groups in double-stranded DNA using NAD as a coenzyme and as the energy source for the reaction. It is essential for DNA replication and repair of damaged DNA. This Yersinia pseudotuberculosis serotype O:1b (strain IP 31758) protein is DNA ligase.